We begin with the raw amino-acid sequence, 199 residues long: Chromophore lyase CpcT/CpeT 2 (199 aa).

This sequence belongs to the CpcT/CpeT biliprotein lyase family.

Its function is as follows. Covalently attaches a chromophore to Cys residue(s) of phycobiliproteins. This Synechococcus sp. (strain JA-3-3Ab) (Cyanobacteria bacterium Yellowstone A-Prime) protein is Chromophore lyase CpcT/CpeT 2.